Reading from the N-terminus, the 235-residue chain is Riboflavin kinase (235 aa).

Positions 45 and 47 each coordinate Mg(2+). The active-site Nucleophile is the glutamate 140.

It belongs to the flavokinase family. Requires Zn(2+) as cofactor. Mg(2+) is required as a cofactor.

It carries out the reaction riboflavin + ATP = FMN + ADP + H(+). The protein operates within cofactor biosynthesis; FMN biosynthesis; FMN from riboflavin (ATP route): step 1/1. In terms of biological role, catalyzes the phosphorylation of riboflavin (vitamin B2) to form flavin mononucleotide (FMN) coenzyme. The chain is Riboflavin kinase (FMN1) from Chaetomium globosum (strain ATCC 6205 / CBS 148.51 / DSM 1962 / NBRC 6347 / NRRL 1970) (Soil fungus).